A 358-amino-acid chain; its full sequence is Membrane-bound lytic murein transglycosylase C (358 aa).

A signal peptide spans 1–16 (MKKILALLVIAPLLVS). Cysteine 17 is lipidated: N-palmitoyl cysteine. A lipid anchor (S-diacylglycerol cysteine) is attached at cysteine 17.

Belongs to the transglycosylase Slt family.

Its subcellular location is the cell outer membrane. The enzyme catalyses Exolytic cleavage of the (1-&gt;4)-beta-glycosidic linkage between N-acetylmuramic acid (MurNAc) and N-acetylglucosamine (GlcNAc) residues in peptidoglycan, from either the reducing or the non-reducing ends of the peptidoglycan chains, with concomitant formation of a 1,6-anhydrobond in the MurNAc residue.. Functionally, murein-degrading enzyme. May play a role in recycling of muropeptides during cell elongation and/or cell division. This chain is Membrane-bound lytic murein transglycosylase C, found in Yersinia pseudotuberculosis serotype O:1b (strain IP 31758).